We begin with the raw amino-acid sequence, 312 residues long: Dihydroorotate dehydrogenase B (NAD(+)), catalytic subunit (312 aa).

Residues Ser23 and 47–48 (KA) each bind FMN. Residues Lys47 and 71-75 (NAIGL) each bind substrate. 2 residues coordinate FMN: Asn103 and Asn131. Asn131 serves as a coordination point for substrate. The active-site Nucleophile is Cys134. 2 residues coordinate FMN: Lys171 and Ile197. A substrate-binding site is contributed by 198 to 199 (NT). FMN is bound by residues Gly223, 249–250 (GG), and 271–272 (GT).

Belongs to the dihydroorotate dehydrogenase family. Type 1 subfamily. In terms of assembly, heterotetramer of 2 PyrK and 2 PyrD type B subunits. FMN serves as cofactor.

The protein localises to the cytoplasm. It catalyses the reaction (S)-dihydroorotate + NAD(+) = orotate + NADH + H(+). It functions in the pathway pyrimidine metabolism; UMP biosynthesis via de novo pathway; orotate from (S)-dihydroorotate (NAD(+) route): step 1/1. In terms of biological role, catalyzes the conversion of dihydroorotate to orotate with NAD(+) as electron acceptor. The sequence is that of Dihydroorotate dehydrogenase B (NAD(+)), catalytic subunit (pyrDB) from Streptococcus pneumoniae serotype 4 (strain ATCC BAA-334 / TIGR4).